A 447-amino-acid chain; its full sequence is Gustatory receptor family protein 3 (447 aa).

Topologically, residues 1–69 (MTITASNTLE…HTHSSARNTM (69 aa)) are extracellular. The chain crosses the membrane as a helical span at residues 70–90 (FKWPLTIYNYLTLAILTAATI). Over 91–116 (RRISQIKQKSATNEEKDAAFHVLNPT) the chain is Cytoplasmic. Residues 117–137 (FVLTLCHALLMFSGLAAGFLL) traverse the membrane as a helical segment. Over 138-171 (LKLQKQREKMYHVLDQGLGRNRNEEHDSHHFKLN) the chain is Extracellular. A helical transmembrane segment spans residues 172–192 (KLFISISFSFAAALSFVQIAT). Topologically, residues 193–211 (KMRYLDLPDTPDLINRKIY) are cytoplasmic. The helical transmembrane segment at 212-232 (FVILEGYVIFIASSCISLVAI) threads the bilayer. Residues 233 to 292 (LFFQLCRILQFSIGQLIEEMVPKEKEECPLPEQSLQQIHDVQIHYQEISNAKLYIEQNFS) are Extracellular-facing. The chain crosses the membrane as a helical span at residues 293 to 313 (FSLFYTYGCCIPLTCLLGYIA). The Cytoplasmic portion of the chain corresponds to 314-328 (FRNGIQADMAETFSV). A helical membrane pass occupies residues 329 to 349 (AIWLTNTMLALMLFSIPAFMI). Over 350–405 (AEEGDKLLTASFKMYHETLCEERDLLVLSQMSFLSFQMHATKLTLTAGNFFMMNRK) the chain is Extracellular. Residues 406 to 426 (IMISLFSAIFTYFLILVQFDA) form a helical membrane-spanning segment. Residues 427–447 (EKERAGECNNQSRVLIVQPPV) lie on the Cytoplasmic side of the membrane.

It belongs to the insect chemoreceptor superfamily. Gustatory receptor (GR) family. Expressed in I2 pharyngeal neurons.

It is found in the membrane. Its function is as follows. Chemoreceptor involved in light-induced avoidance behavior. Probably acts as a molecular sensor in I2 pharyngeal neurons, required for the inhibition of feeding in response to light and hydrogen peroxide. Involved in circadian rhythms, probably by acting as a light sensor. In contrast to lite-1, does not act as a photoreceptor. In Caenorhabditis elegans, this protein is Gustatory receptor family protein 3.